Consider the following 102-residue polypeptide: Small ribosomal subunit protein uS10 (102 aa).

Belongs to the universal ribosomal protein uS10 family. Part of the 30S ribosomal subunit.

In terms of biological role, involved in the binding of tRNA to the ribosomes. The sequence is that of Small ribosomal subunit protein uS10 from Enterococcus faecalis (strain ATCC 700802 / V583).